We begin with the raw amino-acid sequence, 692 residues long: Protein hook (692 aa).

A Calponin-homology (CH) domain is found at 6–123 (SEMYYSLLEW…RLLQLVLGCA (118 aa)). Residues 135 to 576 (EIMGLEEELQ…YQSKVIQLET (442 aa)) adopt a coiled-coil conformation. Residues 161-180 (AGERSPSSSASGGAGSGGAV) are disordered.

This sequence belongs to the hook family. Homodimer. Interacts with microtubules via its N-terminus.

Its subcellular location is the cytoplasm. It localises to the cytoskeleton. It is found in the endosome. The protein resides in the synapse. Functionally, involved in endocytic trafficking by stabilizing organelles of the endocytic pathway. Probably acts as a cytoskeletal linker protein required to tether endosome vesicles to the cytoskeleton. Involved in modulation of endocytosis at stages required for down-regulation of membrane proteins that control synapse size. Not involved in synaptic vesicle recycling. Required in R7 cells for boss endocytosis into multivesicular bodies (MVBs). Has a role in regulating adult longevity. In Drosophila willistoni (Fruit fly), this protein is Protein hook.